The primary structure comprises 566 residues: Urease subunit alpha 2 (566 aa).

One can recognise a Urease domain in the interval G128–F566. 3 residues coordinate Ni(2+): H133, H135, and K216. Residue K216 is modified to N6-carboxylysine. H218 serves as a coordination point for substrate. 2 residues coordinate Ni(2+): H245 and H271. The active-site Proton donor is the H319. Residue D359 coordinates Ni(2+).

This sequence belongs to the metallo-dependent hydrolases superfamily. Urease alpha subunit family. As to quaternary structure, may form a heterohexamer of 3 UreC (alpha) and 3 UreAB (gamma/beta) subunits. May also form a heterotrimer of UreA (gamma), UreB (beta) and UreC (alpha) subunits. Three heterotrimers associate to form the active enzyme. Ni cation serves as cofactor. Post-translationally, carboxylation allows a single lysine to coordinate two nickel ions.

The protein resides in the cytoplasm. The enzyme catalyses urea + 2 H2O + H(+) = hydrogencarbonate + 2 NH4(+). It participates in nitrogen metabolism; urea degradation; CO(2) and NH(3) from urea (urease route): step 1/1. The protein is Urease subunit alpha 2 of Pseudomonas syringae pv. syringae (strain B728a).